A 379-amino-acid chain; its full sequence is Dual-specificity RNA methyltransferase RlmN (379 aa).

Residue E97 is the Proton acceptor of the active site. In terms of domain architecture, Radical SAM core spans 103 to 343; that stretch reads QGGRGTLCVS…VRTTRGDDID (241 aa). A disulfide bridge connects residues C110 and C346. [4Fe-4S] cluster-binding residues include C117, C121, and C124. Residues 171–172, S203, 225–227, and N303 each bind S-adenosyl-L-methionine; these read GE and SLH. C346 (S-methylcysteine intermediate) is an active-site residue.

It belongs to the radical SAM superfamily. RlmN family. The cofactor is [4Fe-4S] cluster.

The protein resides in the cytoplasm. It catalyses the reaction adenosine(2503) in 23S rRNA + 2 reduced [2Fe-2S]-[ferredoxin] + 2 S-adenosyl-L-methionine = 2-methyladenosine(2503) in 23S rRNA + 5'-deoxyadenosine + L-methionine + 2 oxidized [2Fe-2S]-[ferredoxin] + S-adenosyl-L-homocysteine. It carries out the reaction adenosine(37) in tRNA + 2 reduced [2Fe-2S]-[ferredoxin] + 2 S-adenosyl-L-methionine = 2-methyladenosine(37) in tRNA + 5'-deoxyadenosine + L-methionine + 2 oxidized [2Fe-2S]-[ferredoxin] + S-adenosyl-L-homocysteine. Functionally, specifically methylates position 2 of adenine 2503 in 23S rRNA and position 2 of adenine 37 in tRNAs. m2A2503 modification seems to play a crucial role in the proofreading step occurring at the peptidyl transferase center and thus would serve to optimize ribosomal fidelity. The sequence is that of Dual-specificity RNA methyltransferase RlmN from Pseudomonas aeruginosa (strain ATCC 15692 / DSM 22644 / CIP 104116 / JCM 14847 / LMG 12228 / 1C / PRS 101 / PAO1).